Here is a 412-residue protein sequence, read N- to C-terminus: Arginine biosynthesis bifunctional protein ArgJ (412 aa).

Positions 158, 184, 195, 284, 407, and 412 each coordinate substrate. Residue threonine 195 is the Nucleophile of the active site.

This sequence belongs to the ArgJ family. As to quaternary structure, heterotetramer of two alpha and two beta chains.

Its subcellular location is the cytoplasm. The catalysed reaction is N(2)-acetyl-L-ornithine + L-glutamate = N-acetyl-L-glutamate + L-ornithine. It carries out the reaction L-glutamate + acetyl-CoA = N-acetyl-L-glutamate + CoA + H(+). The protein operates within amino-acid biosynthesis; L-arginine biosynthesis; L-ornithine and N-acetyl-L-glutamate from L-glutamate and N(2)-acetyl-L-ornithine (cyclic): step 1/1. It functions in the pathway amino-acid biosynthesis; L-arginine biosynthesis; N(2)-acetyl-L-ornithine from L-glutamate: step 1/4. Its function is as follows. Catalyzes two activities which are involved in the cyclic version of arginine biosynthesis: the synthesis of N-acetylglutamate from glutamate and acetyl-CoA as the acetyl donor, and of ornithine by transacetylation between N(2)-acetylornithine and glutamate. The sequence is that of Arginine biosynthesis bifunctional protein ArgJ from Bartonella quintana (strain Toulouse) (Rochalimaea quintana).